The following is a 521-amino-acid chain: Peroxisomal membrane protein PEX23 (521 aa).

The tract at residues 1–26 is disordered; that stretch reads MPTDPNSNPVSKAGLTPSSINSNISE. 2 N-linked (GlcNAc...) asparagine glycosylation sites follow: Asn23 and Asn53. Transmembrane regions (helical) follow at residues 111-128 and 133-150; these read SYISVLLVTTATLFILYF and IYLGHLSIVGLIFLYSIF. N-linked (GlcNAc...) asparagine glycosylation is present at Asn189. The chain crosses the membrane as a helical span at residues 198 to 217; that stretch reads LLFTSIFLSPGYILVCYLLF. A glycan (N-linked (GlcNAc...) asparagine) is linked at Asn279. The segment at 425–446 is disordered; the sequence is VSPGDDSSTDSASLPHSASETV. A compositionally biased stretch (polar residues) spans 429 to 446; that stretch reads DDSSTDSASLPHSASETV. Asn463 and Asn467 each carry an N-linked (GlcNAc...) asparagine glycan. Residues 465 to 486 form a disordered region; sequence SGNITTSAETAPDSAGTAKKRK.

The protein belongs to the PEX28-32 family. PEX32 subfamily.

It is found in the endoplasmic reticulum membrane. In terms of biological role, with PEX29, contributes to the formation of endoplasmic reticulum-mitochondria junctions which are important for mitochondrial function. Involved in lipid dropplets formation. The sequence is that of Peroxisomal membrane protein PEX23 from Ogataea parapolymorpha (strain ATCC 26012 / BCRC 20466 / JCM 22074 / NRRL Y-7560 / DL-1) (Yeast).